The primary structure comprises 116 residues: HVA22-like protein e (116 aa).

The next 3 helical transmembrane spans lie at 12–32 (HSLA…VIAI), 42–62 (QWLA…ILQS), and 63–83 (LLEW…WLVL).

It belongs to the DP1 family. As to expression, predominantly expressed in stem.

Its subcellular location is the membrane. The sequence is that of HVA22-like protein e (HVA22E) from Arabidopsis thaliana (Mouse-ear cress).